Here is a 286-residue protein sequence, read N- to C-terminus: Bifunctional protein FolD (286 aa).

NADP(+) contacts are provided by residues glycine 165–serine 167 and serine 190.

It belongs to the tetrahydrofolate dehydrogenase/cyclohydrolase family. In terms of assembly, homodimer.

The enzyme catalyses (6R)-5,10-methylene-5,6,7,8-tetrahydrofolate + NADP(+) = (6R)-5,10-methenyltetrahydrofolate + NADPH. It catalyses the reaction (6R)-5,10-methenyltetrahydrofolate + H2O = (6R)-10-formyltetrahydrofolate + H(+). The protein operates within one-carbon metabolism; tetrahydrofolate interconversion. In terms of biological role, catalyzes the oxidation of 5,10-methylenetetrahydrofolate to 5,10-methenyltetrahydrofolate and then the hydrolysis of 5,10-methenyltetrahydrofolate to 10-formyltetrahydrofolate. This Staphylococcus aureus (strain USA300) protein is Bifunctional protein FolD.